Reading from the N-terminus, the 432-residue chain is 5-methylthioadenosine/S-adenosylhomocysteine deaminase (432 aa).

2 residues coordinate Zn(2+): His-62 and His-64. Glu-91 and His-184 together coordinate substrate. Zn(2+) is bound at residue His-211. Residues Glu-214 and Asp-299 each contribute to the substrate site. Residue Asp-299 participates in Zn(2+) binding.

The protein belongs to the metallo-dependent hydrolases superfamily. MTA/SAH deaminase family. It depends on Zn(2+) as a cofactor.

It carries out the reaction S-adenosyl-L-homocysteine + H2O + H(+) = S-inosyl-L-homocysteine + NH4(+). The catalysed reaction is S-methyl-5'-thioadenosine + H2O + H(+) = S-methyl-5'-thioinosine + NH4(+). Functionally, catalyzes the deamination of 5-methylthioadenosine and S-adenosyl-L-homocysteine into 5-methylthioinosine and S-inosyl-L-homocysteine, respectively. Is also able to deaminate adenosine. The sequence is that of 5-methylthioadenosine/S-adenosylhomocysteine deaminase from Haloarcula marismortui (strain ATCC 43049 / DSM 3752 / JCM 8966 / VKM B-1809) (Halobacterium marismortui).